The following is a 437-amino-acid chain: ATP-dependent protease ATPase subunit HslU (437 aa).

Residues V18, G60–E65, D250, E315, and R387 each bind ATP.

It belongs to the ClpX chaperone family. HslU subfamily. In terms of assembly, a double ring-shaped homohexamer of HslV is capped on each side by a ring-shaped HslU homohexamer. The assembly of the HslU/HslV complex is dependent on binding of ATP.

It is found in the cytoplasm. Its function is as follows. ATPase subunit of a proteasome-like degradation complex; this subunit has chaperone activity. The binding of ATP and its subsequent hydrolysis by HslU are essential for unfolding of protein substrates subsequently hydrolyzed by HslV. HslU recognizes the N-terminal part of its protein substrates and unfolds these before they are guided to HslV for hydrolysis. This chain is ATP-dependent protease ATPase subunit HslU, found in Methylobacterium sp. (strain 4-46).